We begin with the raw amino-acid sequence, 335 residues long: Cell division protein ZipA (335 aa).

Topologically, residues 1–4 (MDLN) are periplasmic. Residues 5–25 (AILIILGVIALIILVAHGIWS) traverse the membrane as a helical segment. At 26–335 (NRCEKSQYFE…AERDYLARVS (310 aa)) the chain is on the cytoplasmic side.

It belongs to the ZipA family. In terms of assembly, interacts with FtsZ via their C-terminal domains.

It localises to the cell inner membrane. Functionally, essential cell division protein that stabilizes the FtsZ protofilaments by cross-linking them and that serves as a cytoplasmic membrane anchor for the Z ring. Also required for the recruitment to the septal ring of downstream cell division proteins. The sequence is that of Cell division protein ZipA from Histophilus somni (strain 129Pt) (Haemophilus somnus).